We begin with the raw amino-acid sequence, 334 residues long: Heat-inducible transcription repressor HrcA (334 aa).

This sequence belongs to the HrcA family.

Negative regulator of class I heat shock genes (grpE-dnaK-dnaJ and groELS operons). Prevents heat-shock induction of these operons. This Acidovorax sp. (strain JS42) protein is Heat-inducible transcription repressor HrcA.